A 608-amino-acid chain; its full sequence is Glutamine--fructose-6-phosphate aminotransferase [isomerizing] (608 aa).

C2 (nucleophile; for GATase activity) is an active-site residue. A Glutamine amidotransferase type-2 domain is found at 2-217 (CGIVGIVGHK…DGDWAVVGKT (216 aa)). 2 SIS domains span residues 283-422 (TDID…ARGT) and 456-598 (LSRE…VDQP). Catalysis depends on K603, which acts as the For Fru-6P isomerization activity.

The protein localises to the cytoplasm. The enzyme catalyses D-fructose 6-phosphate + L-glutamine = D-glucosamine 6-phosphate + L-glutamate. Functionally, involved in the production of the root hair deformation (HAD) factor specifically on medicago. In Rhizobium leguminosarum bv. viciae, this protein is Glutamine--fructose-6-phosphate aminotransferase [isomerizing] (nodM).